The chain runs to 364 residues: Chaperone protein DnaJ 1 (364 aa).

The region spanning 7-71 is the J domain; the sequence is DYYEILGVNR…ERRSEYDAIL (65 aa). The CR-type zinc finger occupies 124-200; sequence GCEKEIIYSR…CYGRGRVSAQ (77 aa). Positions 137, 140, 154, 157, 174, 177, 188, and 191 each coordinate Zn(2+). CXXCXGXG motif repeat units lie at residues 137–144, 154–161, 174–181, and 188–195; these read CPVCEGMG, CHACNGEG, CSVCKGKG, and CPTCYGRG.

The protein belongs to the DnaJ family. Homodimer. Requires Zn(2+) as cofactor.

It is found in the cytoplasm. In terms of biological role, participates actively in the response to hyperosmotic and heat shock by preventing the aggregation of stress-denatured proteins and by disaggregating proteins, also in an autonomous, DnaK-independent fashion. Unfolded proteins bind initially to DnaJ; upon interaction with the DnaJ-bound protein, DnaK hydrolyzes its bound ATP, resulting in the formation of a stable complex. GrpE releases ADP from DnaK; ATP binding to DnaK triggers the release of the substrate protein, thus completing the reaction cycle. Several rounds of ATP-dependent interactions between DnaJ, DnaK and GrpE are required for fully efficient folding. Also involved, together with DnaK and GrpE, in the DNA replication of plasmids through activation of initiation proteins. The chain is Chaperone protein DnaJ 1 from Aquifex aeolicus (strain VF5).